Reading from the N-terminus, the 186-residue chain is Lipid A palmitoyltransferase PagP (186 aa).

The N-terminal stretch at 1–25 (MNVSKYVAIFSFVFIQLISVGKVFA) is a signal peptide. Active-site residues include His-58, Asp-101, and Ser-102.

Belongs to the lipid A palmitoyltransferase family. Homodimer.

It localises to the cell outer membrane. It catalyses the reaction lipid A (E. coli) + a 1-hexadecanoyl-2-acyl-sn-glycero-3-phosphocholine = hepta-acyl lipid A (E. coli) + a 2-acyl-sn-glycero-3-phosphocholine. The enzyme catalyses lipid IIA + a 1-hexadecanoyl-2-acyl-sn-glycero-3-phosphocholine = lipid IIB + a 2-acyl-sn-glycero-3-phosphocholine. The catalysed reaction is lipid IVA (E. coli) + a 1-hexadecanoyl-2-acyl-sn-glycero-3-phosphocholine = lipid IVB (E. coli) + a 2-acyl-sn-glycero-3-phosphocholine. Inhibited by lauryldimethylamine oxide (LDAO) and dodecylphosphocholine (DPC). Functionally, transfers a palmitate residue from the sn-1 position of a phospholipid to the N-linked hydroxymyristate on the proximal unit of lipid A or its precursors. Phosphatidylglycerol (PtdGro), phosphatidylethanolamine (PtdEtn), phosphatidylserine (PtdSer) and phosphatidic acid (Ptd-OH) are all effective acyl donors. The chain is Lipid A palmitoyltransferase PagP from Escherichia coli (strain K12).